We begin with the raw amino-acid sequence, 380 residues long: Glycogenin-2 (380 aa).

Residues leucine 10, tyrosine 16, and arginine 95 each coordinate UDP. UDP-alpha-D-glucose contacts are provided by leucine 10, tyrosine 16, arginine 95, lysine 104, aspartate 120, alanine 121, aspartate 122, asparagine 158, threonine 159, aspartate 185, aspartate 188, and glutamine 189. Positions 120, 121, and 122 each coordinate UDP. Position 120 (aspartate 120) interacts with Mn(2+). Aspartate 122 is a Mn(2+) binding site. O-linked (Glc...) tyrosine glycans are attached at residues tyrosine 230 and tyrosine 232. UDP is bound by residues histidine 249, glycine 252, and lysine 255. Residue histidine 249 participates in Mn(2+) binding. 2 residues coordinate UDP-alpha-D-glucose: glycine 252 and lysine 255. The segment at 331–357 is disordered; it reads SVDRNASQKSTAEKHDIEKPTSKPQSA. Positions 341 to 351 are enriched in basic and acidic residues; that stretch reads TAEKHDIEKPT. O-linked (Glc...) tyrosine glycosylation occurs at tyrosine 367.

This sequence belongs to the glycosyltransferase 8 family. Glycogenin subfamily. Interacts with glycogen synthase GSY2. The cofactor is Mn(2+).

The protein resides in the cytoplasm. Its subcellular location is the vacuole. It carries out the reaction L-tyrosyl-[glycogenin] + UDP-alpha-D-glucose = alpha-D-glucosyl-L-tyrosyl-[glycogenin] + UDP + H(+). The catalysed reaction is [1,4-alpha-D-glucosyl](n)-L-tyrosyl-[glycogenin] + UDP-alpha-D-glucose = [1,4-alpha-D-glucosyl](n+1)-L-tyrosyl-[glycogenin] + UDP + H(+). Functionally, self-glucosylating initiator of glycogen synthesis. It catalyzes the formation of a short alpha (1,4)-glucosyl chain covalently attached via a glucose 1-O-tyrosyl linkage to internal tyrosine residues and these chains act as primers for the elongation reaction catalyzed by glycogen synthase. Capable of transferring glucosyl residues to unbound acceptors such as free oligoglucans or oligoglucan derivatives. The protein is Glycogenin-2 (GLG2) of Saccharomyces cerevisiae (strain YJM789) (Baker's yeast).